Here is a 227-residue protein sequence, read N- to C-terminus: Cytochrome c oxidase subunit 2 (227 aa).

The Mitochondrial intermembrane portion of the chain corresponds to 1-14 (MAYPMQLGFQDATS). A helical transmembrane segment spans residues 15–45 (PIMEELLHFHDHTLMIVFLISSLVLYIISLM). Topologically, residues 46-59 (LTTKLTHTSTMDAQ) are mitochondrial matrix. The helical transmembrane segment at 60 to 87 (EVETIWTILPAIILILIALPSLRILYMM) threads the bilayer. Over 88–227 (DEINNPSLTV…YFEKWSASML (140 aa)) the chain is Mitochondrial intermembrane. Residues histidine 161, cysteine 196, glutamate 198, cysteine 200, histidine 204, and methionine 207 each contribute to the Cu cation site. Glutamate 198 contacts Mg(2+). Tyrosine 218 is subject to Phosphotyrosine.

The protein belongs to the cytochrome c oxidase subunit 2 family. As to quaternary structure, component of the cytochrome c oxidase (complex IV, CIV), a multisubunit enzyme composed of 14 subunits. The complex is composed of a catalytic core of 3 subunits MT-CO1, MT-CO2 and MT-CO3, encoded in the mitochondrial DNA, and 11 supernumerary subunits COX4I, COX5A, COX5B, COX6A, COX6B, COX6C, COX7A, COX7B, COX7C, COX8 and NDUFA4, which are encoded in the nuclear genome. The complex exists as a monomer or a dimer and forms supercomplexes (SCs) in the inner mitochondrial membrane with NADH-ubiquinone oxidoreductase (complex I, CI) and ubiquinol-cytochrome c oxidoreductase (cytochrome b-c1 complex, complex III, CIII), resulting in different assemblies (supercomplex SCI(1)III(2)IV(1) and megacomplex MCI(2)III(2)IV(2)). Found in a complex with TMEM177, COA6, COX18, COX20, SCO1 and SCO2. Interacts with TMEM177 in a COX20-dependent manner. Interacts with COX20. Interacts with COX16. The cofactor is Cu cation.

The protein resides in the mitochondrion inner membrane. The enzyme catalyses 4 Fe(II)-[cytochrome c] + O2 + 8 H(+)(in) = 4 Fe(III)-[cytochrome c] + 2 H2O + 4 H(+)(out). Component of the cytochrome c oxidase, the last enzyme in the mitochondrial electron transport chain which drives oxidative phosphorylation. The respiratory chain contains 3 multisubunit complexes succinate dehydrogenase (complex II, CII), ubiquinol-cytochrome c oxidoreductase (cytochrome b-c1 complex, complex III, CIII) and cytochrome c oxidase (complex IV, CIV), that cooperate to transfer electrons derived from NADH and succinate to molecular oxygen, creating an electrochemical gradient over the inner membrane that drives transmembrane transport and the ATP synthase. Cytochrome c oxidase is the component of the respiratory chain that catalyzes the reduction of oxygen to water. Electrons originating from reduced cytochrome c in the intermembrane space (IMS) are transferred via the dinuclear copper A center (CU(A)) of subunit 2 and heme A of subunit 1 to the active site in subunit 1, a binuclear center (BNC) formed by heme A3 and copper B (CU(B)). The BNC reduces molecular oxygen to 2 water molecules using 4 electrons from cytochrome c in the IMS and 4 protons from the mitochondrial matrix. The protein is Cytochrome c oxidase subunit 2 (MT-CO2) of Bison bonasus (European bison).